We begin with the raw amino-acid sequence, 147 residues long: Lipoprotein signal peptidase (147 aa).

The next 4 helical transmembrane spans lie at 10–30 (ISIF…IKFL), 34–54 (GIVK…GTAF), 59–79 (FLGS…LVYM), and 87–107 (WFIY…RLIY). Active-site residues include D112 and D130. A helical transmembrane segment spans residues 121–141 (LHWPAFNVADSAISIGIVLFV).

It belongs to the peptidase A8 family.

The protein resides in the cell inner membrane. It carries out the reaction Release of signal peptides from bacterial membrane prolipoproteins. Hydrolyzes -Xaa-Yaa-Zaa-|-(S,diacylglyceryl)Cys-, in which Xaa is hydrophobic (preferably Leu), and Yaa (Ala or Ser) and Zaa (Gly or Ala) have small, neutral side chains.. It participates in protein modification; lipoprotein biosynthesis (signal peptide cleavage). Functionally, this protein specifically catalyzes the removal of signal peptides from prolipoproteins. In Thermodesulfovibrio yellowstonii (strain ATCC 51303 / DSM 11347 / YP87), this protein is Lipoprotein signal peptidase.